The primary structure comprises 549 residues: Probable protein kinase UbiB (549 aa).

Residues D123–L501 form the Protein kinase domain. Residues L129 to V137 and K152 contribute to the ATP site. D287 functions as the Proton acceptor in the catalytic mechanism. 2 consecutive transmembrane segments (helical) span residues S498–Q518 and A520–W540.

It belongs to the ABC1 family. UbiB subfamily.

The protein resides in the cell inner membrane. It participates in cofactor biosynthesis; ubiquinone biosynthesis [regulation]. Its function is as follows. Is probably a protein kinase regulator of UbiI activity which is involved in aerobic coenzyme Q (ubiquinone) biosynthesis. This is Probable protein kinase UbiB from Shewanella oneidensis (strain ATCC 700550 / JCM 31522 / CIP 106686 / LMG 19005 / NCIMB 14063 / MR-1).